The following is a 114-amino-acid chain: Beta-microseminoprotein (114 aa).

The signal sequence occupies residues 1–20; the sequence is MNVLLGGFVIFATFVTLCNA. Disulfide bonds link Cys-22-Cys-70, Cys-38-Cys-62, Cys-57-Cys-93, Cys-60-Cys-69, and Cys-84-Cys-107.

This sequence belongs to the beta-microseminoprotein family. In terms of assembly, homodimer; Interacts with PI16.

The protein localises to the secreted. In Papio anubis (Olive baboon), this protein is Beta-microseminoprotein (MSMB).